Consider the following 244-residue polypeptide: Na(+)-translocating NADH-quinone reductase subunit E (244 aa).

Helical transmembrane passes span 11 to 31 (LLGI…TFLG), 50 to 70 (MSVA…HYFI), 90 to 110 (FLEL…LELL), 123 to 143 (GIFL…LFGI), 153 to 173 (VVFS…FATI), and 191 to 211 (ISFI…GIDI).

It belongs to the NqrDE/RnfAE family. As to quaternary structure, composed of six subunits; NqrA, NqrB, NqrC, NqrD, NqrE and NqrF.

It localises to the cell inner membrane. It catalyses the reaction a ubiquinone + n Na(+)(in) + NADH + H(+) = a ubiquinol + n Na(+)(out) + NAD(+). Functionally, NQR complex catalyzes the reduction of ubiquinone-1 to ubiquinol by two successive reactions, coupled with the transport of Na(+) ions from the cytoplasm to the periplasm. NqrA to NqrE are probably involved in the second step, the conversion of ubisemiquinone to ubiquinol. The chain is Na(+)-translocating NADH-quinone reductase subunit E from Chlamydia trachomatis serovar L2 (strain ATCC VR-902B / DSM 19102 / 434/Bu).